A 543-amino-acid chain; its full sequence is Type I restriction enzyme MpnII methylase subunit (543 aa).

Residues 208 to 213 (EFFTPQ), 240 to 242 (SGS), and E265 contribute to the S-adenosyl-L-methionine site.

It belongs to the N(4)/N(6)-methyltransferase family. In terms of assembly, the methyltransferase is composed of M and S polypeptides.

It catalyses the reaction a 2'-deoxyadenosine in DNA + S-adenosyl-L-methionine = an N(6)-methyl-2'-deoxyadenosine in DNA + S-adenosyl-L-homocysteine + H(+). In terms of biological role, the subtype gamma methyltransferase (M) subunit of a type I restriction enzyme. The M and S subunits together form a methyltransferase (MTase) that probably methylates A-2 on the top strand and A-3 on the bottom strand of the sequence 5'-GAN(7)TAY-3'. As the bacterial DNA is methylated on this sequence and this is the only type I methylase in the genome, it is probably responsible for all of the methylation on this site in the genome. The R subunit has multiple frameshifts and is probably not expressed in this bacteria. This chain is Type I restriction enzyme MpnII methylase subunit, found in Mycoplasma pneumoniae (strain ATCC 29342 / M129 / Subtype 1) (Mycoplasmoides pneumoniae).